Reading from the N-terminus, the 469-residue chain is Siroheme synthase (469 aa).

Residues 1 to 203 (MDYLPIFTDL…GQEQDAKQEL (203 aa)) form a precorrin-2 dehydrogenase /sirohydrochlorin ferrochelatase region. NAD(+) contacts are provided by residues 22 to 23 (DV) and 43 to 44 (PV). Serine 128 carries the phosphoserine modification. The tract at residues 214-469 (GQVALIGSGP…LQQSAVVKLA (256 aa)) is uroporphyrinogen-III C-methyltransferase. Position 223 (proline 223) interacts with S-adenosyl-L-methionine. The active-site Proton acceptor is aspartate 246. Lysine 268 (proton donor) is an active-site residue. S-adenosyl-L-methionine contacts are provided by residues 299-301 (GGD), valine 304, 329-330 (TA), methionine 381, and glycine 410.

The protein in the N-terminal section; belongs to the precorrin-2 dehydrogenase / sirohydrochlorin ferrochelatase family. This sequence in the C-terminal section; belongs to the precorrin methyltransferase family.

The catalysed reaction is uroporphyrinogen III + 2 S-adenosyl-L-methionine = precorrin-2 + 2 S-adenosyl-L-homocysteine + H(+). It catalyses the reaction precorrin-2 + NAD(+) = sirohydrochlorin + NADH + 2 H(+). The enzyme catalyses siroheme + 2 H(+) = sirohydrochlorin + Fe(2+). It participates in cofactor biosynthesis; adenosylcobalamin biosynthesis; precorrin-2 from uroporphyrinogen III: step 1/1. Its pathway is cofactor biosynthesis; adenosylcobalamin biosynthesis; sirohydrochlorin from precorrin-2: step 1/1. It functions in the pathway porphyrin-containing compound metabolism; siroheme biosynthesis; precorrin-2 from uroporphyrinogen III: step 1/1. The protein operates within porphyrin-containing compound metabolism; siroheme biosynthesis; siroheme from sirohydrochlorin: step 1/1. It participates in porphyrin-containing compound metabolism; siroheme biosynthesis; sirohydrochlorin from precorrin-2: step 1/1. Its function is as follows. Multifunctional enzyme that catalyzes the SAM-dependent methylations of uroporphyrinogen III at position C-2 and C-7 to form precorrin-2 via precorrin-1. Then it catalyzes the NAD-dependent ring dehydrogenation of precorrin-2 to yield sirohydrochlorin. Finally, it catalyzes the ferrochelation of sirohydrochlorin to yield siroheme. The protein is Siroheme synthase of Photobacterium profundum (strain SS9).